A 506-amino-acid polypeptide reads, in one-letter code: MLFLSFYAGSWESWICCCCVIPVDRPWDRGRRWQLEMADTRSVYETRFEAAVKVIQSLPKNGSFQPTNEMMLRFYSFYKQATEGPCKLSRPGFWDPIGRYKWDAWSSLGDMTKEEAMIAYVEEMKKIIETMPMTEKVEELLHVIGPFYEIVEDKKNSKSSDLTSDLGNVLTSSNAKAVNGKAESSDSGAESEEEEAQEELKGAEQSGSDDKKMMTKSTDKNLEIIVTNGYKDSFAQDSDIHTDSSRSARRSEDKKPTDQSSQQTGNTVLCVHQDTNEDPGEDASGVHHLTSDSDSEVYCDSMEQFGQEEYYLGGDPAQHLEGSGFCEDAQLSPGNGSIGKMQMRAVKGKGEVKHGGEDGRSSSGTPHREKRGGESEDISGVRRGRGHRMPHLSEGTKGRQVGSGGDGERWGSDRGSRGSLNEQIALVLIRLQEDMQNVLQRLHKLETLTASQAKLSWQTSNQPSSQRPSWWPFEMSPGALAFAIIWPFIAQWLVHLYYQRRRRKLN.

Positions 44–133 (YETRFEAAVK…MKKIIETMPM (90 aa)) constitute an ACB domain. An acyl-CoA contacts are provided by residues 55–64 (IQSLPKNGSF), 75–79 (YSFYK), lysine 101, and tyrosine 120. Positions 175-217 (AKAVNGKAESSDSGAESEEEEAQEELKGAEQSGSDDKKMMTKS) are disordered. Residues 181-209 (KAESSDSGAESEEEEAQEELKGAEQSGSD) adopt a coiled-coil conformation. Serine 184, serine 185, serine 187, serine 191, serine 206, and serine 233 each carry phosphoserine. Basic and acidic residues predominate over residues 198–217 (EELKGAEQSGSDDKKMMTKS). 2 disordered regions span residues 234–302 (FAQD…CDSM) and 345–417 (AVKG…RGSR). Basic and acidic residues predominate over residues 238 to 257 (SDIHTDSSRSARRSEDKKPT). Positions 258–267 (DQSSQQTGNT) are enriched in polar residues. Serine 301 is modified (phosphoserine). Residues 348 to 360 (GKGEVKHGGEDGR) show a composition bias toward basic and acidic residues. A Phosphoserine modification is found at serine 403. Positions 406-416 (DGERWGSDRGS) are enriched in basic and acidic residues. The stretch at 426–451 (LVLIRLQEDMQNVLQRLHKLETLTAS) forms a coiled coil. Position 444 is an N6-acetyllysine (lysine 444). Residues 478-498 (GALAFAIIWPFIAQWLVHLYY) traverse the membrane as a helical segment.

Belongs to the ATG37 family.

Its subcellular location is the peroxisome membrane. Its function is as follows. Acyl-CoA binding protein which acts as the peroxisome receptor for pexophagy but is dispensable for aggrephagy and nonselective autophagy. Binds medium- and long-chain acyl-CoA esters. In Rattus norvegicus (Rat), this protein is Acyl-CoA-binding domain-containing protein 5 (Acbd5).